Here is a 335-residue protein sequence, read N- to C-terminus: Glyceraldehyde-3-phosphate dehydrogenase (335 aa).

Residues 13–14 (TI) and Gly-111 contribute to the NAD(+) site. D-glyceraldehyde 3-phosphate is bound at residue 140-142 (SCN). The Nucleophile role is filled by Cys-141. Arg-169 provides a ligand contact to NAD(+). Residue 195–196 (HG) coordinates D-glyceraldehyde 3-phosphate. Gln-300 contributes to the NAD(+) binding site.

This sequence belongs to the glyceraldehyde-3-phosphate dehydrogenase family. In terms of assembly, homotetramer.

The protein resides in the cytoplasm. It carries out the reaction D-glyceraldehyde 3-phosphate + phosphate + NADP(+) = (2R)-3-phospho-glyceroyl phosphate + NADPH + H(+). The enzyme catalyses D-glyceraldehyde 3-phosphate + phosphate + NAD(+) = (2R)-3-phospho-glyceroyl phosphate + NADH + H(+). The protein operates within carbohydrate degradation; glycolysis; pyruvate from D-glyceraldehyde 3-phosphate: step 1/5. The chain is Glyceraldehyde-3-phosphate dehydrogenase from Methanococcoides burtonii (strain DSM 6242 / NBRC 107633 / OCM 468 / ACE-M).